Reading from the N-terminus, the 534-residue chain is Prolyl 4-hydroxylase subunit alpha-1 (534 aa).

Residues 1-17 (MIWYILVVGILLPQSLA) form the signal peptide. A glycan (N-linked (GlcNAc...) asparagine) is linked at N113. Residues 205-238 (VSVLDYLSYAVYQQGDLDKALLLTKKLLELDPEH) form a TPR repeat. The disordered stretch occupies residues 258–277 (ANKSSSDDQSDQKTTLKKKG). The N-linked (GlcNAc...) asparagine glycan is linked to N259. A Fe2OG dioxygenase domain is found at 411–519 (TAEELQVANY…KWVSNKWLHE (109 aa)). 3 residues coordinate Fe cation: H429, D431, and H500. Position 510 (K510) interacts with 2-oxoglutarate.

This sequence belongs to the P4HA family. In terms of assembly, heterotetramer of two alpha-1 chains and two beta chains (P4HB)(the beta chain is the multi-functional PDI), where P4HB plays the role of a structural subunit; this tetramer catalyzes the formation of 4-hydroxyproline in collagen. It depends on Fe(2+) as a cofactor. Requires L-ascorbate as cofactor.

The protein resides in the endoplasmic reticulum lumen. The enzyme catalyses L-prolyl-[collagen] + 2-oxoglutarate + O2 = trans-4-hydroxy-L-prolyl-[collagen] + succinate + CO2. Its function is as follows. Catalyzes the post-translational formation of 4-hydroxyproline in -Xaa-Pro-Gly- sequences in collagens and other proteins. This is Prolyl 4-hydroxylase subunit alpha-1 (P4HA1) from Bos taurus (Bovine).